The chain runs to 75 residues: MKQNIHPDYHFIKVQLTDGTVFETRSTWGKEGDTMKLDIDPRVHPAWTGGRSQLVDAGGQVARFNKRFGALLKKK.

Belongs to the bacterial ribosomal protein bL31 family. Type A subfamily. Part of the 50S ribosomal subunit.

In terms of biological role, binds the 23S rRNA. This Zymomonas mobilis subsp. mobilis (strain ATCC 31821 / ZM4 / CP4) protein is Large ribosomal subunit protein bL31.